The sequence spans 688 residues: UvrABC system protein C (688 aa).

Positions 1–14 (MSPLDQKNKPRGGA) are enriched in basic and acidic residues. The segment at 1 to 20 (MSPLDQKNKPRGGADDLPPE) is disordered. The region spanning 71 to 149 (NAPGVYRMMN…IKRLRPRFNV (79 aa)) is the GIY-YIG domain. The 36-residue stretch at 259–294 (QKVKTEISAAMQQASEDLDFERAAIYRDRLAALSHV) folds into the UVR domain.

Belongs to the UvrC family. In terms of assembly, interacts with UvrB in an incision complex.

It localises to the cytoplasm. In terms of biological role, the UvrABC repair system catalyzes the recognition and processing of DNA lesions. UvrC both incises the 5' and 3' sides of the lesion. The N-terminal half is responsible for the 3' incision and the C-terminal half is responsible for the 5' incision. The sequence is that of UvrABC system protein C from Mesorhizobium japonicum (strain LMG 29417 / CECT 9101 / MAFF 303099) (Mesorhizobium loti (strain MAFF 303099)).